The primary structure comprises 105 residues: UPF0045 protein ECM15 (105 aa).

It belongs to the UPF0045 family.

The polypeptide is UPF0045 protein ECM15 (ECM15) (Eremothecium gossypii (strain ATCC 10895 / CBS 109.51 / FGSC 9923 / NRRL Y-1056) (Yeast)).